The primary structure comprises 55 residues: Ferredoxin (55 aa).

4Fe-4S ferredoxin-type domains are found at residues 2–27 (FVIN…TQGD) and 28–55 (TQFV…PNQE). [4Fe-4S] cluster contacts are provided by C8, C11, C14, C18, C37, C40, C43, and C47.

It depends on [4Fe-4S] cluster as a cofactor.

In terms of biological role, ferredoxins are iron-sulfur proteins that transfer electrons in a wide variety of metabolic reactions. In Clostridium butyricum, this protein is Ferredoxin.